The sequence spans 152 residues: Deoxyuridine 5'-triphosphate nucleotidohydrolase (152 aa).

Substrate-binding positions include 72–74 (RSG), N85, and 89–91 (TID).

This sequence belongs to the dUTPase family. Mg(2+) is required as a cofactor.

The catalysed reaction is dUTP + H2O = dUMP + diphosphate + H(+). It functions in the pathway pyrimidine metabolism; dUMP biosynthesis; dUMP from dCTP (dUTP route): step 2/2. In terms of biological role, this enzyme is involved in nucleotide metabolism: it produces dUMP, the immediate precursor of thymidine nucleotides and it decreases the intracellular concentration of dUTP so that uracil cannot be incorporated into DNA. The sequence is that of Deoxyuridine 5'-triphosphate nucleotidohydrolase from Bradyrhizobium sp. (strain ORS 278).